A 383-amino-acid chain; its full sequence is Chaperone protein DnaJ (383 aa).

One can recognise a J domain in the interval 5 to 70 (DYYEALGVAR…QKRAAYDQFG (66 aa)). The CR-type zinc-finger motif lies at 139–217 (GTEVQIRVPT…CGGRGRVQSQ (79 aa)). 8 residues coordinate Zn(2+): C152, C155, C169, C172, C191, C194, C205, and C208. 4 CXXCXGXG motif repeats span residues 152-159 (CDACDGKG), 169-176 (CPTCKGHG), 191-198 (CPRCGGSG), and 205-212 (CRKCGGRG). The disordered stretch occupies residues 230–249 (TGDRIRLSGEGEPGENGGPP).

Belongs to the DnaJ family. Homodimer. Zn(2+) serves as cofactor.

It is found in the cytoplasm. Functionally, participates actively in the response to hyperosmotic and heat shock by preventing the aggregation of stress-denatured proteins and by disaggregating proteins, also in an autonomous, DnaK-independent fashion. Unfolded proteins bind initially to DnaJ; upon interaction with the DnaJ-bound protein, DnaK hydrolyzes its bound ATP, resulting in the formation of a stable complex. GrpE releases ADP from DnaK; ATP binding to DnaK triggers the release of the substrate protein, thus completing the reaction cycle. Several rounds of ATP-dependent interactions between DnaJ, DnaK and GrpE are required for fully efficient folding. Also involved, together with DnaK and GrpE, in the DNA replication of plasmids through activation of initiation proteins. This Alkalilimnicola ehrlichii (strain ATCC BAA-1101 / DSM 17681 / MLHE-1) protein is Chaperone protein DnaJ.